A 556-amino-acid polypeptide reads, in one-letter code: Zinc finger protein 18 (556 aa).

The SCAN box domain occupies arginine 41 to proline 123. A disordered region spans residues glutamine 169 to glutamate 195. A KRAB domain is found at glutamate 218 to arginine 291. C2H2-type zinc fingers lie at residues proline 415–histidine 437, phenylalanine 443–histidine 465, cysteine 471–histidine 493, tyrosine 499–histidine 521, and tyrosine 527–histidine 549.

It belongs to the krueppel C2H2-type zinc-finger protein family.

Its subcellular location is the nucleus. Its function is as follows. May be involved in transcriptional regulation. The protein is Zinc finger protein 18 (Znf18) of Mus musculus (Mouse).